Reading from the N-terminus, the 362-residue chain is Mitochondrial glycine transporter (362 aa).

Solcar repeat units follow at residues P22–S108, L132–D236, and R269–S354. The next 6 membrane-spanning stretches (helical) occupy residues L28–Q53, G83–W109, L138–E163, G211–K234, I273–L299, and G329–I347.

The protein belongs to the mitochondrial carrier (TC 2.A.29) family. SLC25A38 subfamily.

It is found in the mitochondrion inner membrane. The catalysed reaction is glycine(in) = glycine(out). Mitochondrial glycine transporter that imports glycine into the mitochondrial matrix. Plays an important role in providing glycine for the first enzymatic step in heme biosynthesis, the condensation of glycine with succinyl-CoA to produce 5-aminolevulinate (ALA) in the mitochondrial matrix. This Candida albicans (strain SC5314 / ATCC MYA-2876) (Yeast) protein is Mitochondrial glycine transporter.